A 487-amino-acid polypeptide reads, in one-letter code: Probable glycine dehydrogenase (decarboxylating) subunit 2 (487 aa).

Residue Lys-269 is modified to N6-(pyridoxal phosphate)lysine.

It belongs to the GcvP family. C-terminal subunit subfamily. As to quaternary structure, the glycine cleavage system is composed of four proteins: P, T, L and H. In this organism, the P 'protein' is a heterodimer of two subunits. Pyridoxal 5'-phosphate is required as a cofactor.

The catalysed reaction is N(6)-[(R)-lipoyl]-L-lysyl-[glycine-cleavage complex H protein] + glycine + H(+) = N(6)-[(R)-S(8)-aminomethyldihydrolipoyl]-L-lysyl-[glycine-cleavage complex H protein] + CO2. The glycine cleavage system catalyzes the degradation of glycine. The P protein binds the alpha-amino group of glycine through its pyridoxal phosphate cofactor; CO(2) is released and the remaining methylamine moiety is then transferred to the lipoamide cofactor of the H protein. This is Probable glycine dehydrogenase (decarboxylating) subunit 2 from Prosthecochloris aestuarii (strain DSM 271 / SK 413).